A 258-amino-acid polypeptide reads, in one-letter code: Small ribosomal subunit protein eS1 (258 aa).

The tract at residues 235–258 is disordered; it reads VASSGDAGSAVRRDGYEPPVQESV.

This sequence belongs to the eukaryotic ribosomal protein eS1 family. As to quaternary structure, component of the small ribosomal subunit. Mature ribosomes consist of a small (40S) and a large (60S) subunit. The 40S subunit contains about 33 different proteins and 1 molecule of RNA (18S). The 60S subunit contains about 49 different proteins and 3 molecules of RNA (28S, 5.8S and 5S).

The protein resides in the cytoplasm. The chain is Small ribosomal subunit protein eS1 from Trichoplax adhaerens (Trichoplax reptans).